The primary structure comprises 141 residues: Hemoglobin subunit alpha-D (141 aa).

Positions Met-1–Arg-141 constitute a Globin domain. Heme b is bound by residues His-58 and His-87.

Belongs to the globin family. Heterotetramer of two alpha-D chains and two beta chains. Red blood cells.

Its function is as follows. Involved in oxygen transport from the lung to the various peripheral tissues. This is Hemoglobin subunit alpha-D (HBAD) from Phasianus colchicus colchicus (Black-necked pheasant).